We begin with the raw amino-acid sequence, 729 residues long: MLSITPEIIKEIVQGEYHDVFAVLGPHAQKNGYVIRAFFPAAKTLQVKSKLDGSVLAEAVMRNEEGFFEANCNCSEKPSYYFTVGYGDKEFDVEDMYRFGSTIPEGDLYLFGEGTYEQAYRLFGAHPTEVDGVPGCRFTVWAPNAKTVAVVGDFNFWQGRAHVMRKHIPSGIWELFIPYLGEGALYKYEIRNHSGDCLPHKADPYGFAAQKPPEQASVVSVLDRYEWNDAEWFAKANNWTQRDRPISIYEVHLGSWKRVVEEDNRYLSYKELAADLIPYVKSMGFTHIQLMPISEFPFDGSWGYQPVGLYAPTSRFGSPEDFKYFVDCCHQNDLAVLIDWVPGHFPTDSHGLGLFDGTPLYEHADSRQGFHPDWNTYIYNYGRHEVKSFLMANALFWLEQYHIDGLRVDAVASMLYLDYSRKDGEWLPNSYGGRENLEAIDFLRLVNERVYKRFPHAMMVAEESTAWPGVSSPTSCGGLGFGYKWNMGWMNDSLQYISKEPIHRQYHHHDMTFSLHYAFSENFVLPLSHDEVVHGKRSLLGRMPGDAWQQFANLRAYYAFMWTHPGKKLLFMGGEFAQGMEWNHDTSLSWHQLEIDYHSGIQTLVKSLNRLYTDVPALYKEDCMSSGFEWVEADDRHNSIFAFLRKAKDEKPVLVVANFTPVAREGYRVGVNQPGYYRELLNTDSELFGGSNLGNEGGVHSEEIAWHQRPQSVSINIPALAAVVFQLDS.

The active-site Nucleophile is the Asp409. Glu462 (proton donor) is an active-site residue.

This sequence belongs to the glycosyl hydrolase 13 family. GlgB subfamily. As to quaternary structure, monomer.

The catalysed reaction is Transfers a segment of a (1-&gt;4)-alpha-D-glucan chain to a primary hydroxy group in a similar glucan chain.. It participates in glycan biosynthesis; glycogen biosynthesis. Catalyzes the formation of the alpha-1,6-glucosidic linkages in glycogen by scission of a 1,4-alpha-linked oligosaccharide from growing alpha-1,4-glucan chains and the subsequent attachment of the oligosaccharide to the alpha-1,6 position. This Saccharophagus degradans (strain 2-40 / ATCC 43961 / DSM 17024) protein is 1,4-alpha-glucan branching enzyme GlgB.